Here is a 254-residue protein sequence, read N- to C-terminus: MADSKMKLHCGFIWGNSAALFCINEKGLDFELVFVDWLAGEAKTKTFLSTLNPFGEVPVLEDGDLKLFEPKAITRYLAEQYKDVGTNLLPDDPKKRAIMSMWMEVDSNQFLPIASTLIKELIINPYQGLATDDTAVQENKEKLSEVLNIYETRLGESPYLAGESFSLADLHHLAPIDYLLNTDEEELKNLIYSRPNVAAWVEKMKMRPAWLKTVVMKNHIVDLMKQRRLPIKLDSSCHESTVVAQKNAIAIENK.

The region spanning 4 to 85 (SKMKLHCGFI…YLAEQYKDVG (82 aa)) is the GST N-terminal domain. Glutathione-binding positions include 42-43 (AK), 56-57 (EV), and 69-70 (EP). In terms of domain architecture, GST C-terminal spans 92 to 231 (DPKKRAIMSM…DLMKQRRLPI (140 aa)).

It belongs to the GST superfamily. Phi family.

Its subcellular location is the cytoplasm. The protein resides in the cytosol. The enzyme catalyses RX + glutathione = an S-substituted glutathione + a halide anion + H(+). Its function is as follows. May be involved in the conjugation of reduced glutathione to a wide number of exogenous and endogenous hydrophobic electrophiles and have a detoxification role against certain herbicides. The chain is Glutathione S-transferase F14 from Arabidopsis thaliana (Mouse-ear cress).